Here is a 645-residue protein sequence, read N- to C-terminus: Transcription termination factor FttA (645 aa).

Positions 10–77 are KHa; sequence APSNQNIMAT…IIVRIDESVR (68 aa). The KHb stretch occupies residues 78–146; the sequence is KKEEDARKML…WTLRIRKATT (69 aa). Positions 187-391 are metallo-beta-lactamase N-terminus; it reads EISLTALGGF…LLIESTYGAK (205 aa). H250, H252, D254, H255, H337, and D360 together coordinate Zn(2+). The tract at residues 392–586 is beta-Casp; that stretch reads EDIQPTRQEV…CRMEKLDGFS (195 aa). The metallo-beta-lactamase C-terminus stretch occupies residues 587-645; it reads GHSDYNQLTGFVQKLRPKLRRVLVNHGERRKSENLALAVRRMFRIPAHYPQIQESIKLF. Residue H612 participates in Zn(2+) binding.

Belongs to the metallo-beta-lactamase superfamily. RNA-metabolizing metallo-beta-lactamase-like family. FttA subfamily. Homodimer. Interacts with RNA polymerase (RNAP), interacts with the Spt4-Spt5 complex. Requires Zn(2+) as cofactor.

Terminates transcription on the whole genome. Termination is linked to FttA-mediated RNA cleavage and does not require NTP hydrolysis. Cleaves endonucleolytically at the RNA exit channel of RNA polymerase (RNAP); the 5'-3' exonuclease activity of this protein degrades the nascent RNA released from RNAP. In terms of biological role, terminates transcription genome-wide in M.maripaludis. Restores wild-type growth to a strain of Methanococcus maripaludis depleted for this gene at 22 degrees Celsius and prevents transcriptional read-through. Transcription termination is most effective in vivo on RNAs with more than one U4-tract in their 3'-ends. Has endonuclease activity after U-rich tracts in transcription termination sequences. The protein is Transcription termination factor FttA of Cenarchaeum symbiosum (strain A).